Here is a 293-residue protein sequence, read N- to C-terminus: Acetyl-coenzyme A carboxylase carboxyl transferase subunit beta (293 aa).

The CoA carboxyltransferase N-terminal domain occupies 29–293 (LWRKCPRCEG…MGWPPLALDD (265 aa)). Cys-33, Cys-36, Cys-52, and Cys-55 together coordinate Zn(2+). The C4-type zinc-finger motif lies at 33–55 (CPRCEGVVYRPELDRNMDVCPKC).

Belongs to the AccD/PCCB family. Acetyl-CoA carboxylase is a heterohexamer composed of biotin carboxyl carrier protein (AccB), biotin carboxylase (AccC) and two subunits each of ACCase subunit alpha (AccA) and ACCase subunit beta (AccD). Zn(2+) serves as cofactor.

It is found in the cytoplasm. It catalyses the reaction N(6)-carboxybiotinyl-L-lysyl-[protein] + acetyl-CoA = N(6)-biotinyl-L-lysyl-[protein] + malonyl-CoA. Its pathway is lipid metabolism; malonyl-CoA biosynthesis; malonyl-CoA from acetyl-CoA: step 1/1. Component of the acetyl coenzyme A carboxylase (ACC) complex. Biotin carboxylase (BC) catalyzes the carboxylation of biotin on its carrier protein (BCCP) and then the CO(2) group is transferred by the transcarboxylase to acetyl-CoA to form malonyl-CoA. This chain is Acetyl-coenzyme A carboxylase carboxyl transferase subunit beta, found in Alcanivorax borkumensis (strain ATCC 700651 / DSM 11573 / NCIMB 13689 / SK2).